The sequence spans 751 residues: Cellulose synthase-like protein G3 (751 aa).

2 helical membrane passes run 47–67 and 72–92; these read IYAVFHTCGIIALMYHHVHSL and TTLITSLLLLSDIVLAFMWAT. Residues aspartate 161 and aspartate 466 contribute to the active site. 6 consecutive transmembrane segments (helical) span residues 543–563, 577–597, 617–639, 674–694, 697–717, and 731–751; these read CWAFWSLPLIVYGFLPQLALL, FWLYIVLFLGAYGQDLLDFVL, FSSHLFGFIEFTLKTLNLSTHGF, TVAIVNLLAFVWGLYGLFAWG, LVLELMLASFAVVNCLPIYEA, and VCFVAGILTFVLIVSGYVFLK.

It belongs to the glycosyltransferase 2 family. Plant cellulose synthase-like G subfamily.

It is found in the golgi apparatus membrane. Functionally, thought to be a Golgi-localized beta-glycan synthase that polymerize the backbones of noncellulosic polysaccharides (hemicelluloses) of plant cell wall. This Arabidopsis thaliana (Mouse-ear cress) protein is Cellulose synthase-like protein G3 (CSLG3).